Reading from the N-terminus, the 236-residue chain is uncharacterized protein (236 aa).

Positions 3–116 (TCLIVDDELF…RLSKTLKRVR (114 aa)) constitute a Response regulatory domain. Position 54 is a 4-aspartylphosphate (Asp-54). Residues 135–235 (LPCYSGSKLK…LKSLKQLFGF (101 aa)) form the HTH LytTR-type domain.

This is an uncharacterized protein from Shewanella oneidensis (strain ATCC 700550 / JCM 31522 / CIP 106686 / LMG 19005 / NCIMB 14063 / MR-1).